The following is a 247-amino-acid chain: Small ribosomal subunit protein uS3 (247 aa).

Residues 18 to 87 enclose the KH type-2 domain; it reads IDEYLAKRFY…NPQITVRRVE (70 aa). The segment at 226–247 is disordered; it reads QQGEVVGEAPNTPLEEQGQKQG.

Belongs to the universal ribosomal protein uS3 family. As to quaternary structure, part of the 30S ribosomal subunit.

Its function is as follows. Binds the lower part of the 30S subunit head. In Hyperthermus butylicus (strain DSM 5456 / JCM 9403 / PLM1-5), this protein is Small ribosomal subunit protein uS3.